The primary structure comprises 96 residues: UPF0184 protein CG14818 (96 aa).

Disordered regions lie at residues 1–28 and 70–96; these read MSPK…LQEM and IAEE…AAPK. Positions 8 to 21 are enriched in polar residues; it reads DPSSSGDSGNTNVQ. Residues 21 to 77 adopt a coiled-coil conformation; it reads QEADLQEMEDVNNSLDALSCALDAVEQRTDDIMSQLRELLNSNREIRRLIAEENDNA. A compositionally biased stretch (acidic residues) spans 72 to 85; sequence EENDNAPESGDDNM.

This sequence belongs to the UPF0184 (EST00098) family.

This chain is UPF0184 protein CG14818, found in Drosophila melanogaster (Fruit fly).